The primary structure comprises 248 residues: Probable transcriptional regulatory protein Acel_1346 (248 aa).

It belongs to the TACO1 family.

Its subcellular location is the cytoplasm. This chain is Probable transcriptional regulatory protein Acel_1346, found in Acidothermus cellulolyticus (strain ATCC 43068 / DSM 8971 / 11B).